A 359-amino-acid chain; its full sequence is Tropomodulin-1 (359 aa).

Residues 39-61 (PDNALLPAGLRQKDQTTKAPTGP) are disordered. The interval 39 to 138 (PDNALLPAGL…CDIAAILGMH (100 aa)) is tropomyosin-binding.

Belongs to the tropomodulin family. Binds to the N-terminus of tropomyosin and to actin. Interacts with FLII.

The protein resides in the cytoplasm. The protein localises to the cytoskeleton. Functionally, blocks the elongation and depolymerization of the actin filaments at the pointed end. The Tmod/TM complex contributes to the formation of the short actin protofilament, which in turn defines the geometry of the membrane skeleton. May play an important role in regulating the organization of actin filaments by preferentially binding to a specific tropomyosin isoform at its N-terminus. The polypeptide is Tropomodulin-1 (TMOD1) (Bos taurus (Bovine)).